Here is a 289-residue protein sequence, read N- to C-terminus: NAC domain-containing protein 2 (289 aa).

One can recognise an NAC domain in the interval 7 to 158 (LPPGFRFHPT…DWVLCRIYNK (152 aa)).

In terms of assembly, interacts with KIN10 and KIN11.

The protein resides in the nucleus. In Arabidopsis thaliana (Mouse-ear cress), this protein is NAC domain-containing protein 2 (NAC002).